We begin with the raw amino-acid sequence, 161 residues long: Ribonuclease H (161 aa).

Residues 1 to 142 (MLKLVKMFSD…CDKIARQSAQ (142 aa)) enclose the RNase H type-1 domain. 4 residues coordinate Mg(2+): D10, E48, D70, and D134.

It belongs to the RNase H family. As to quaternary structure, monomer. It depends on Mg(2+) as a cofactor.

Its subcellular location is the cytoplasm. It catalyses the reaction Endonucleolytic cleavage to 5'-phosphomonoester.. Endonuclease that specifically degrades the RNA of RNA-DNA hybrids. This is Ribonuclease H (rnhA) from Buchnera aphidicola subsp. Schizaphis graminum (strain Sg).